The chain runs to 83 residues: Acid shock protein (83 aa).

The N-terminal stretch at 1 to 21 is a signal peptide; the sequence is MKKVLALVVAAAMGLSSAAFA. A compositionally biased stretch (low complexity) spans 22–40; the sequence is AETATPAKTATPAKTTQNT. Positions 22–56 are excised as a propeptide; that stretch reads AETATPAKTATPAKTTQNTQHHKKQHKKTVEQKAQ. Positions 22–83 are disordered; the sequence is AETATPAKTA…TSKTTSQPAA (62 aa). Residues 57 to 70 show a composition bias toward basic residues; sequence AAKKHQKKDGKKAP. Residues 71–83 are compositionally biased toward low complexity; it reads AKSTSKTTSQPAA.

This sequence belongs to the Asr family. In terms of processing, proteolytic processing gives rise to the active protein.

Its subcellular location is the periplasm. Required for growth and/or survival at acidic conditions. The protein is Acid shock protein of Salmonella heidelberg (strain SL476).